Consider the following 349-residue polypeptide: Hydroxymethylglutaryl-CoA synthase (349 aa).

(3S)-3-hydroxy-3-methylglutaryl-CoA is bound by residues Asp29 and Ala30. Catalysis depends on Glu81, which acts as the Proton donor/acceptor. Residues Cys113 and Thr154 each coordinate (3S)-3-hydroxy-3-methylglutaryl-CoA. Cys113 functions as the Acyl-thioester intermediate in the catalytic mechanism. Arg202 is a CoA binding site. The (3S)-3-hydroxy-3-methylglutaryl-CoA site is built by Thr204 and His237. His237 (proton donor/acceptor) is an active-site residue. Lys242 contacts CoA. (3S)-3-hydroxy-3-methylglutaryl-CoA-binding residues include Lys246, Asn269, and Ser299.

It belongs to the thiolase-like superfamily. Archaeal HMG-CoA synthase family. As to quaternary structure, interacts with acetoacetyl-CoA thiolase that catalyzes the precedent step in the pathway and with a DUF35 protein. The acetoacetyl-CoA thiolase/HMG-CoA synthase complex channels the intermediate via a fused CoA-binding site, which allows for efficient coupling of the endergonic thiolase reaction with the exergonic HMGCS reaction.

It catalyses the reaction acetoacetyl-CoA + acetyl-CoA + H2O = (3S)-3-hydroxy-3-methylglutaryl-CoA + CoA + H(+). The protein operates within metabolic intermediate biosynthesis; (R)-mevalonate biosynthesis; (R)-mevalonate from acetyl-CoA: step 2/3. In terms of biological role, catalyzes the condensation of acetyl-CoA with acetoacetyl-CoA to form 3-hydroxy-3-methylglutaryl-CoA (HMG-CoA). Functions in the mevalonate (MVA) pathway leading to isopentenyl diphosphate (IPP), a key precursor for the biosynthesis of isoprenoid compounds that are building blocks of archaeal membrane lipids. The sequence is that of Hydroxymethylglutaryl-CoA synthase from Methanosarcina mazei (strain ATCC BAA-159 / DSM 3647 / Goe1 / Go1 / JCM 11833 / OCM 88) (Methanosarcina frisia).